We begin with the raw amino-acid sequence, 77 residues long: Translation initiation factor IF-1, chloroplastic (77 aa).

Residues 1–71 (MKEQKLIHEG…TKGRIIYRLR (71 aa)) form the S1-like domain.

It belongs to the IF-1 family. As to quaternary structure, component of the 30S ribosomal translation pre-initiation complex which assembles on the 30S ribosome in the order IF-2 and IF-3, IF-1 and N-formylmethionyl-tRNA(fMet); mRNA recruitment can occur at any time during PIC assembly.

The protein localises to the plastid. It is found in the chloroplast. In terms of biological role, one of the essential components for the initiation of protein synthesis. Stabilizes the binding of IF-2 and IF-3 on the 30S subunit to which N-formylmethionyl-tRNA(fMet) subsequently binds. Helps modulate mRNA selection, yielding the 30S pre-initiation complex (PIC). Upon addition of the 50S ribosomal subunit IF-1, IF-2 and IF-3 are released leaving the mature 70S translation initiation complex. The chain is Translation initiation factor IF-1, chloroplastic from Drimys granadensis.